Consider the following 325-residue polypeptide: Putative [LysW]-lysine/[LysW]-ornithine hydrolase (325 aa).

Zn(2+) is bound at residue histidine 66. Aspartate 68 is a catalytic residue. Residue aspartate 90 participates in Zn(2+) binding. Glutamate 117 acts as the Proton acceptor in catalysis. 3 residues coordinate Zn(2+): glutamate 118, glutamate 139, and histidine 297.

This sequence belongs to the peptidase M20A family. LysK subfamily. Requires Zn(2+) as cofactor. Co(2+) serves as cofactor.

It is found in the cytoplasm. The catalysed reaction is [amino-group carrier protein]-C-terminal-gamma-(L-lysyl)-L-glutamate + H2O = [amino-group carrier protein]-C-terminal-L-glutamate + L-lysine. It catalyses the reaction [amino-group carrier protein]-C-terminal-gamma-(L-ornithyl)-L-glutamate + H2O = [amino-group carrier protein]-C-terminal-L-glutamate + L-ornithine. The protein operates within amino-acid biosynthesis; L-lysine biosynthesis via AAA pathway; L-lysine from L-alpha-aminoadipate (Thermus route): step 5/5. It participates in amino-acid biosynthesis; L-arginine biosynthesis. Catalyzes the release of L-lysine from [LysW]-gamma-L-lysine and the release of L-ornithine from [LysW]-L-ornithine. The protein is Putative [LysW]-lysine/[LysW]-ornithine hydrolase of Pyrococcus horikoshii (strain ATCC 700860 / DSM 12428 / JCM 9974 / NBRC 100139 / OT-3).